Here is a 387-residue protein sequence, read N- to C-terminus: Protein REVEILLE 1 (387 aa).

Composition is skewed to polar residues over residues 1 to 17 (MASS…NASL) and 27 to 37 (KQIQFNDQSFG). Residues 1–44 (MASSPLTANVQGTNASLRNRDEETADKQIQFNDQSFGGNDYAPK) form a disordered region. The 55-residue stretch at 50–104 (TITKERERWTDEEHKKFVEALKLYGRAWRRIEEHVGSKTAVQIRSHAQKFFSKVA) folds into the HTH myb-type domain. A DNA-binding region (H-T-H motif) is located at residues 77–100 (WRRIEEHVGSKTAVQIRSHAQKFF). Disordered regions lie at residues 105–200 (REAT…TANA), 306–334 (KAVQ…TTEP), and 350–387 (AFSE…HLHL). The segment covering 124–134 (RPKRKPAHPYP) has biased composition (basic residues). Residues 141 to 166 (ADQTSRSVSPSERDTQSPTSVLSTVG) show a composition bias toward polar residues. 2 stretches are compositionally biased toward low complexity: residues 172–200 (SLDS…TANA) and 312–323 (GSSTGSNTGSVD). Residues 324–333 (DTGHTEKTTE) are compositionally biased toward basic and acidic residues.

It localises to the nucleus. In terms of biological role, morning-phased transcription factor integrating the circadian clock and auxin pathways. Binds to the evening element (EE) of promoters. Does not act within the central clock, but regulates free auxin levels in a time-of-day specific manner. Positively regulates the expression of YUC8 during the day, but has no effect during the night. Negative regulator of freezing tolerance. This chain is Protein REVEILLE 1 (RVE1), found in Arabidopsis thaliana (Mouse-ear cress).